We begin with the raw amino-acid sequence, 377 residues long: NADP-dependent oxidoreductase lnbE (377 aa).

NADP(+)-binding positions include 170-173 (GGNG), 257-263 (LTNPRVS), and 293-295 (SPV).

It belongs to the NADP-dependent oxidoreductase L4BD family.

Its pathway is secondary metabolite biosynthesis. NADP-dependent oxidoreductase; part of the lnb gene cluster that mediates the biosynthesis of diastereomeric piperazines. Lna and lnb clusters encode sets of enzymes that produce overlapping sets of previously undescribed metabolites such as piperazinomycin-like metabolites or morpholine. The lna and lnb biosynthetic pathways appear to be part of a signaling network that controls the formation of sclerotia, a resilient overwintering structure. One primary function of the non-canonical nonribosomal peptide synthetases lnaA and lnbA consists in the reduction of L-tyrosine. The presence in the clusters of tailoring enzymes such as the oxidoreductases lnaB, lnbB, lnaE or lnbE, as well as of the cytochrome P450 monooxygenases lnaC, lnaD, or lnbC, might explain formation of various diastereomeric piperazines. The protein is NADP-dependent oxidoreductase lnbE of Aspergillus flavus (strain ATCC 200026 / FGSC A1120 / IAM 13836 / NRRL 3357 / JCM 12722 / SRRC 167).